A 189-amino-acid polypeptide reads, in one-letter code: ATP synthase subunit b 1 (189 aa).

The chain crosses the membrane as a helical span at residues 32 to 52 (TYFASQLFWLTIAFVILYIAL).

It belongs to the ATPase B chain family. In terms of assembly, F-type ATPases have 2 components, F(1) - the catalytic core - and F(0) - the membrane proton channel. F(1) has five subunits: alpha(3), beta(3), gamma(1), delta(1), epsilon(1). F(0) has three main subunits: a(1), b(2) and c(10-14). The alpha and beta chains form an alternating ring which encloses part of the gamma chain. F(1) is attached to F(0) by a central stalk formed by the gamma and epsilon chains, while a peripheral stalk is formed by the delta and b chains.

It is found in the cell inner membrane. F(1)F(0) ATP synthase produces ATP from ADP in the presence of a proton or sodium gradient. F-type ATPases consist of two structural domains, F(1) containing the extramembraneous catalytic core and F(0) containing the membrane proton channel, linked together by a central stalk and a peripheral stalk. During catalysis, ATP synthesis in the catalytic domain of F(1) is coupled via a rotary mechanism of the central stalk subunits to proton translocation. Functionally, component of the F(0) channel, it forms part of the peripheral stalk, linking F(1) to F(0). This chain is ATP synthase subunit b 1, found in Maricaulis maris (strain MCS10) (Caulobacter maris).